Reading from the N-terminus, the 625-residue chain is Arginine--tRNA ligase (625 aa).

The 'HIGH' region signature appears at 128-138 (VNPTKPLHMGH).

This sequence belongs to the class-I aminoacyl-tRNA synthetase family.

The protein localises to the cytoplasm. It carries out the reaction tRNA(Arg) + L-arginine + ATP = L-arginyl-tRNA(Arg) + AMP + diphosphate. This Pyrococcus abyssi (strain GE5 / Orsay) protein is Arginine--tRNA ligase (argS).